A 173-amino-acid polypeptide reads, in one-letter code: Xanthine-guanine phosphoribosyltransferase (173 aa).

5-phospho-alpha-D-ribose 1-diphosphate contacts are provided by residues 48 to 49 (RG) and 107 to 115 (DDLVDTGKT). Asp108 serves as a coordination point for Mg(2+). Positions 111 and 154 each coordinate guanine. The xanthine site is built by Asp111 and Ile154. Residues 111-115 (DTGKT) and 153-154 (WI) each bind GMP.

This sequence belongs to the purine/pyrimidine phosphoribosyltransferase family. XGPT subfamily. Homotetramer. Mg(2+) serves as cofactor.

Its subcellular location is the cell inner membrane. It catalyses the reaction GMP + diphosphate = guanine + 5-phospho-alpha-D-ribose 1-diphosphate. The enzyme catalyses XMP + diphosphate = xanthine + 5-phospho-alpha-D-ribose 1-diphosphate. The catalysed reaction is IMP + diphosphate = hypoxanthine + 5-phospho-alpha-D-ribose 1-diphosphate. It functions in the pathway purine metabolism; GMP biosynthesis via salvage pathway; GMP from guanine: step 1/1. The protein operates within purine metabolism; XMP biosynthesis via salvage pathway; XMP from xanthine: step 1/1. Functionally, purine salvage pathway enzyme that catalyzes the transfer of the ribosyl-5-phosphate group from 5-phospho-alpha-D-ribose 1-diphosphate (PRPP) to the N9 position of the 6-oxopurines guanine and xanthine to form the corresponding ribonucleotides GMP (guanosine 5'-monophosphate) and XMP (xanthosine 5'-monophosphate), with the release of PPi. To a lesser extent, also acts on hypoxanthine. This Rhodopseudomonas palustris (strain ATCC BAA-98 / CGA009) protein is Xanthine-guanine phosphoribosyltransferase.